Reading from the N-terminus, the 186-residue chain is MTEKKEMEVVKGLNVERYMGRWYEIASFPSRFQPKNGVDTRATYTLNPDGTIHVLNETWSNGKRGFIEGSAYKADPKSDEAKLKVKFYVPPFLPIIPVTGDYWVLYIDPDYQHALIGQPSRSYLWILSRTAQMEEETYKQLVEKAVEEGYDISKLHKTPQSDTPPESNTAPEDSKGVWWFKSLFGK.

The HPR (Hydrophobic proline-rich) signature appears at 90–97 (PPFLPIIP). A disordered region spans residues 154 to 174 (KLHKTPQSDTPPESNTAPEDS). Polar residues predominate over residues 158–171 (TPQSDTPPESNTAP).

It belongs to the calycin superfamily. Lipocalin family. In terms of tissue distribution, expressed ubiquitously at similar levels, except in dry seeds (at protein level). Present in seeds.

It is found in the cell membrane. It localises to the cytoplasm. The protein resides in the plastid. Its subcellular location is the chloroplast membrane. Involved in basal (BT) and acquired thermotolerance (AT), probably by preventing plasma membrane lipids peroxidation induced by severe heat-shock (HS). Lipocalin that confers protection against oxidative stress caused by heat, freezing, paraquat and light. Confers resistance to high salt (NaCl) levels, probably by protecting chloroplasts from ion toxicity via ion homeostasis maintenance. Required for seed longevity by ensuring polyunsaturated lipids integrity. This is Temperature-induced lipocalin-1 from Arabidopsis thaliana (Mouse-ear cress).